We begin with the raw amino-acid sequence, 487 residues long: MKYHDLRDFMSQLEKTGELKRVGVEVDTYLEMTEICDRVLRAEGPAILFEKPKGHSIPVLANLFGTPKRVALGMGEESVQALREVGKLLAYLKEPEPPKGLKDAWDKLPILKQVLNMAPKKVSNAPCQEIVWEGKDVDLSRLPIQHCWPGDIAPLITWGLVVTKGPHKNRQNLGIYRQQVLGPNKVIMRWLAHRGGALDFREFQLANPGQPFPVAVVLGCDPATILGAVTPVPDSLSEYQFAGLLRGGKTELTQCIGSGLQVPASAEIVLEGVIHPGEMALEGPYGDHTGYYNEQAEFPVFTIDRITMRKNPIYHSTYTGKPPDEPAVLGVALNEVFVPLLQKQYPEIVDFYLPPEGCSYRMAIVSIKKAYPGHAKRIMFGIWSFLRQFMYTKTIIVVDDDIDIRDWKEVIWAMTTRMDATRDTTLVDNTPIDYLDFASPVAGLGSKMGLDATNKWPGETTREWGRPIVMDADVKKRVDTMWQELGI.

Position 172 (Asn172) interacts with Mn(2+). Residues 175–177 (IYR), 189–191 (RWL), and 194–195 (RG) contribute to the prenylated FMN site. Glu238 provides a ligand contact to Mn(2+). Asp287 serves as the catalytic Proton donor.

It belongs to the UbiD family. In terms of assembly, homohexamer. Prenylated FMN is required as a cofactor. Mn(2+) serves as cofactor.

It is found in the cell membrane. The enzyme catalyses a 4-hydroxy-3-(all-trans-polyprenyl)benzoate + H(+) = a 2-(all-trans-polyprenyl)phenol + CO2. The protein operates within cofactor biosynthesis; ubiquinone biosynthesis. In terms of biological role, catalyzes the decarboxylation of 3-octaprenyl-4-hydroxy benzoate to 2-octaprenylphenol, an intermediate step in ubiquinone biosynthesis. In Dechloromonas aromatica (strain RCB), this protein is 3-octaprenyl-4-hydroxybenzoate carboxy-lyase.